A 3036-amino-acid chain; its full sequence is DmX-like protein 2 (3036 aa).

WD repeat units follow at residues 108–145 (FLSS…ILEE), 167–207 (KTSV…KSSI), and 230–278 (AHPR…EDCL). Residue Ser326 is modified to Phosphoserine. A disordered region spans residues 417–480 (KQVDHENDDA…EGSPRTYSRL (64 aa)). The span at 422-434 (ENDDADREDEEHS) shows a compositional bias: acidic residues. Residues 435-473 (QEDRERGLHMKLDHDLSLDRESEAGTGSSEHEDGEREGS) show a composition bias toward basic and acidic residues. Position 473 is a phosphoserine (Ser473). The stretch at 492–532 (DRKIETLLTEWNKNPDMLFTIHPVDGTFLVWHVKYLDEYNP) is one WD 4 repeat. Ser588 carries the phosphoserine modification. 3 WD repeats span residues 595–634 (HSRS…KSAF), 751–803 (LHTS…RKLL), and 878–920 (QPSQ…VQAC). Positions 932–959 (SLLSVPGQKNVDSSPETSPSVSPMPHSS) are disordered. Phosphoserine is present on residues Ser944 and Ser945. The span at 949–959 (SPSVSPMPHSS) shows a compositional bias: low complexity. The stretch at 1000–1037 (LSSSSIYPVCLAPYLVVTTCSDNKVRFWKCCMEANPEC) is one WD 8 repeat. Residues Ser1140, Ser1143, and Ser1151 each carry the phosphoserine modification. WD repeat units follow at residues 1163–1204 (PNIK…VTEQ) and 1244–1281 (GTPS…VKFG). 2 positions are modified to phosphoserine: Ser1287 and Ser1400. A Phosphothreonine modification is found at Thr1417. At Ser1857 the chain carries Phosphoserine. Residues 1927–1936 (ISHRMDDVPS) show a composition bias toward basic and acidic residues. The interval 1927-1952 (ISHRMDDVPSHSKALSDGNGSSGIEW) is disordered. Position 1984 is a phosphoserine (Ser1984). Residues 1999–2033 (KSTDAREKDKQSDQKASDPNMLLTPQEEDDPEGDT) form a disordered region. Residues 2001–2014 (TDAREKDKQSDQKA) show a composition bias toward basic and acidic residues. Thr2022 is modified (phosphothreonine). Residues 2024-2033 (QEEDDPEGDT) are compositionally biased toward acidic residues. Positions 2122-2153 (GSYERHQIERRRLQAKREHAERRKSWLQKNQD) form a coiled coil. Ser2399 and Ser2640 each carry phosphoserine. WD repeat units follow at residues 2761-2800 (RNLH…QLVC), 2804-2843 (AGNA…SNPK), 2850-2892 (CHSK…GNSL), 2898-2937 (CHDH…LIHT), 2940-2979 (AHDS…LIHS), and 2992-3030 (NIGA…NIPN).

Interacts with MADD and RAB3GAP.

It localises to the cytoplasmic vesicle. The protein resides in the secretory vesicle. Its subcellular location is the synaptic vesicle membrane. The protein localises to the neuronal dense core vesicle. May serve as a scaffold protein for MADD and RAB3GA on synaptic vesicles. Plays a role in the brain as a key controller of neuronal and endocrine homeostatic processes. The chain is DmX-like protein 2 (DMXL2) from Homo sapiens (Human).